The primary structure comprises 429 residues: uncharacterized protein (429 aa).

The next 11 membrane-spanning stretches (helical) occupy residues 27 to 47 (PFFFLFCLFIPFDNTSLQSIG), 48 to 68 (GIMTASPSALILLPGLFVSIL), 78 to 98 (ILLCFFGVLLISFLYYFYWVF), 106 to 126 (IFILDRGSRYFLLYVFYFLAL), 142 to 162 (ALIIIVVIFSVLLNYLDPAII), 198 to 218 (LLLAVLLNWSTFFLVTVTIVI), 219 to 239 (AILTTSKGAALSFLICICFYF), 249 to 269 (VLLSLCSIVISYIIFKYYFLD), 288 to 308 (FIVGLKIFLFNPLGVGFFGYL), 351 to 371 (LILDLLIIYGVFFLIPFIYFI), and 399 to 419 (FFISHLGSYFTPFCIAFLIIL).

The protein resides in the cell membrane. In terms of biological role, may function as a transporter. This is an uncharacterized protein from Klebsiella pneumoniae.